A 382-amino-acid polypeptide reads, in one-letter code: Dual-specificity RNA methyltransferase RlmN (382 aa).

The active-site Proton acceptor is E96. The region spanning 102–342 (QGKRGTLCVS…VRTTRGEDID (241 aa)) is the Radical SAM core domain. C109 and C345 form a disulfide bridge. C116, C120, and C123 together coordinate [4Fe-4S] cluster. Residues 170–171 (GE), S202, 224–226 (SLH), and N302 contribute to the S-adenosyl-L-methionine site. The S-methylcysteine intermediate role is filled by C345.

This sequence belongs to the radical SAM superfamily. RlmN family. [4Fe-4S] cluster serves as cofactor.

It is found in the cytoplasm. It carries out the reaction adenosine(2503) in 23S rRNA + 2 reduced [2Fe-2S]-[ferredoxin] + 2 S-adenosyl-L-methionine = 2-methyladenosine(2503) in 23S rRNA + 5'-deoxyadenosine + L-methionine + 2 oxidized [2Fe-2S]-[ferredoxin] + S-adenosyl-L-homocysteine. It catalyses the reaction adenosine(37) in tRNA + 2 reduced [2Fe-2S]-[ferredoxin] + 2 S-adenosyl-L-methionine = 2-methyladenosine(37) in tRNA + 5'-deoxyadenosine + L-methionine + 2 oxidized [2Fe-2S]-[ferredoxin] + S-adenosyl-L-homocysteine. In terms of biological role, specifically methylates position 2 of adenine 2503 in 23S rRNA and position 2 of adenine 37 in tRNAs. m2A2503 modification seems to play a crucial role in the proofreading step occurring at the peptidyl transferase center and thus would serve to optimize ribosomal fidelity. The protein is Dual-specificity RNA methyltransferase RlmN of Pseudomonas fluorescens (strain ATCC BAA-477 / NRRL B-23932 / Pf-5).